The chain runs to 563 residues: Putative cysteine ligase BshC (563 aa).

It belongs to the BshC family.

In Chlorobium phaeobacteroides (strain BS1), this protein is Putative cysteine ligase BshC.